A 239-amino-acid chain; its full sequence is Peptidyl-tRNA hydrolase (239 aa).

Tyr14 provides a ligand contact to tRNA. The active-site Proton acceptor is His19. Residues Phe64, Asn66, and Asn112 each coordinate tRNA. Residues 186–239 (RTAPPRPSTGTGRPPAKTPARAEEPPAPAASPAPATAPLPDARSPLQKLVDRFK) form a disordered region. Low complexity predominate over residues 193 to 204 (STGTGRPPAKTP). The span at 210 to 222 (PPAPAASPAPATA) shows a compositional bias: pro residues.

The protein belongs to the PTH family. Monomer.

The protein localises to the cytoplasm. It catalyses the reaction an N-acyl-L-alpha-aminoacyl-tRNA + H2O = an N-acyl-L-amino acid + a tRNA + H(+). Functionally, hydrolyzes ribosome-free peptidyl-tRNAs (with 1 or more amino acids incorporated), which drop off the ribosome during protein synthesis, or as a result of ribosome stalling. Its function is as follows. Catalyzes the release of premature peptidyl moieties from peptidyl-tRNA molecules trapped in stalled 50S ribosomal subunits, and thus maintains levels of free tRNAs and 50S ribosomes. In Ruegeria pomeroyi (strain ATCC 700808 / DSM 15171 / DSS-3) (Silicibacter pomeroyi), this protein is Peptidyl-tRNA hydrolase.